A 304-amino-acid chain; its full sequence is Bifunctional protein FolD (304 aa).

NADP(+) contacts are provided by residues 176-178 (GAS), isoleucine 201, and isoleucine 242.

This sequence belongs to the tetrahydrofolate dehydrogenase/cyclohydrolase family. As to quaternary structure, homodimer.

It carries out the reaction (6R)-5,10-methylene-5,6,7,8-tetrahydrofolate + NADP(+) = (6R)-5,10-methenyltetrahydrofolate + NADPH. It catalyses the reaction (6R)-5,10-methenyltetrahydrofolate + H2O = (6R)-10-formyltetrahydrofolate + H(+). It functions in the pathway one-carbon metabolism; tetrahydrofolate interconversion. Its function is as follows. Catalyzes the oxidation of 5,10-methylenetetrahydrofolate to 5,10-methenyltetrahydrofolate and then the hydrolysis of 5,10-methenyltetrahydrofolate to 10-formyltetrahydrofolate. This chain is Bifunctional protein FolD, found in Gluconobacter oxydans (strain 621H) (Gluconobacter suboxydans).